The primary structure comprises 65 residues: Conotoxin Lp5.1 (65 aa).

The signal sequence occupies residues 1–22; the sequence is MRCVPVFIILLLLIPSAPSVDA. The propeptide occupies 23–50; it reads QRKTKDDVPLASFHDNAKRTLKRLWNKR.

This sequence belongs to the conotoxin T superfamily. Contains 2 disulfide bonds that can be either 'C1-C3, C2-C4' or 'C1-C4, C2-C3', since these disulfide connectivities have been observed for conotoxins with cysteine framework V (for examples, see AC P0DQQ7 and AC P81755). Expressed by the venom duct.

Its subcellular location is the secreted. The sequence is that of Conotoxin Lp5.1 from Conus leopardus (Leopard cone).